The following is a 508-amino-acid chain: Cyclic AMP-responsive element-binding protein 5 (508 aa).

The segment at 16–40 adopts a C2H2-type zinc-finger fold; that stretch reads FVCSAPGCSQRFPTEDHLMIHRHKH. Lysine 50 is covalently cross-linked (Glycyl lysine isopeptide (Lys-Gly) (interchain with G-Cter in SUMO2)). 2 positions are modified to phosphothreonine: threonine 59 and threonine 61. Phosphoserine is present on serine 137. The segment at 265-391 is disordered; that stretch reads RQDQTPHHHM…LERNRAAATR (127 aa). 2 stretches are compositionally biased toward basic residues: residues 271–280 and 289–326; these read HHHMHSHPHQ and PYPHQHQHPAHHPHPQPHHQQNHPHHHSHSHLHAHPAH. The segment covering 337 to 346 has biased composition (polar residues); sequence TGNQAQVSPA. Residues 347–357 show a composition bias toward low complexity; that stretch reads TQQMQPTQTIQ. Basic and acidic residues predominate over residues 369–386; it reads VVDEDPDERRRKFLERNR. A bZIP domain is found at 375 to 438; the sequence is DERRRKFLER…AQLKQLLLTH (64 aa). A basic motif region spans residues 377-397; the sequence is RRRKFLERNRAAATRCRQKRK. The tract at residues 403–431 is leucine-zipper; sequence LEKKAEELTQTNMQLQNEVSMLKNEVAQL. The tract at residues 449–468 is disordered; it reads ESQGYLSPESSPPASPVPAC.

The protein belongs to the bZIP family. Binds DNA as a homodimer or as a heterodimer with JUN or ATF2/CREBP1.

Its subcellular location is the nucleus. Binds to the cAMP response element and activates transcription. In Homo sapiens (Human), this protein is Cyclic AMP-responsive element-binding protein 5 (CREB5).